Reading from the N-terminus, the 1129-residue chain is Translation initiation factor IF-2 (1129 aa).

Composition is skewed to low complexity over residues 33 to 42 (AARSHSSSIS) and 56 to 99 (GGSP…AAKP). Disordered stretches follow at residues 33-462 (AARS…IGEN) and 485-515 (SLAR…ETAR). Residues 100 to 112 (SPKPSAPSRPEAP) show a composition bias toward pro residues. Positions 135–147 (STPAAAAPAAAPS) are enriched in low complexity. The segment covering 148–161 (APAPSAPTPRPKPT) has biased composition (pro residues). A compositionally biased stretch (low complexity) spans 162–175 (APKASAPAPTASAP). Pro residues-rich tracts occupy residues 176–191 (SAPP…PAPA) and 211–221 (PTAPPTRPQPK). Residues 257 to 273 (GQRPGVSPRPSGPPGQR) are compositionally biased toward low complexity. Residues 431 to 445 (GRPDWDDSAKLEALR) show a composition bias toward basic and acidic residues. Basic residues-rich tracts occupy residues 490–499 (SKPRTKHKPA) and 506–515 (IRKRRKETAR). The tr-type G domain maps to 621–793 (RRPPVVTVMG…ILLVTEVEDL (173 aa)). Positions 630–637 (GHVDHGKT) are G1. 630 to 637 (GHVDHGKT) contributes to the GTP binding site. The tract at residues 655–659 (GITQH) is G2. Residues 680–683 (DTPG) form a G3 region. GTP contacts are provided by residues 680-684 (DTPGH) and 734-737 (NKID). A G4 region spans residues 734 to 737 (NKID). Residues 770–772 (SAL) form a G5 region.

It belongs to the TRAFAC class translation factor GTPase superfamily. Classic translation factor GTPase family. IF-2 subfamily.

It is found in the cytoplasm. Functionally, one of the essential components for the initiation of protein synthesis. Protects formylmethionyl-tRNA from spontaneous hydrolysis and promotes its binding to the 30S ribosomal subunits. Also involved in the hydrolysis of GTP during the formation of the 70S ribosomal complex. The chain is Translation initiation factor IF-2 from Synechococcus sp. (strain CC9311).